Here is a 78-residue protein sequence, read N- to C-terminus: Acyl carrier protein (78 aa).

The Carrier domain maps to Ser-2 to Ala-77. Residue Ser-37 is modified to O-(pantetheine 4'-phosphoryl)serine.

Belongs to the acyl carrier protein (ACP) family. 4'-phosphopantetheine is transferred from CoA to a specific serine of apo-ACP by AcpS. This modification is essential for activity because fatty acids are bound in thioester linkage to the sulfhydryl of the prosthetic group.

It is found in the cytoplasm. It participates in lipid metabolism; fatty acid biosynthesis. Carrier of the growing fatty acid chain in fatty acid biosynthesis. Is probably involved in the biosynthesis of docosahexaenoic acid (DHA) which is produced by this bacterium as a fatty acyl component in its membrane lipid. This is Acyl carrier protein from Moritella marina (Vibrio marinus).